The sequence spans 294 residues: Protease HtpX homolog (294 aa).

2 consecutive transmembrane segments (helical) span residues 12 to 32 (VLFG…ASSF) and 34 to 54 (SPGV…YSYW). His-138 contacts Zn(2+). Glu-139 is a catalytic residue. His-142 contributes to the Zn(2+) binding site. A run of 2 helical transmembrane segments spans residues 152 to 172 (SVAG…VFFG) and 188 to 208 (LALL…QLAI). Glu-213 provides a ligand contact to Zn(2+).

Belongs to the peptidase M48B family. Zn(2+) serves as cofactor.

It localises to the cell membrane. The protein is Protease HtpX homolog of Kineococcus radiotolerans (strain ATCC BAA-149 / DSM 14245 / SRS30216).